The chain runs to 246 residues: 1-(5-phosphoribosyl)-5-[(5-phosphoribosylamino)methylideneamino] imidazole-4-carboxamide isomerase (246 aa).

Asp-8 (proton acceptor) is an active-site residue. Catalysis depends on Asp-129, which acts as the Proton donor.

This sequence belongs to the HisA/HisF family.

The protein resides in the cytoplasm. It carries out the reaction 1-(5-phospho-beta-D-ribosyl)-5-[(5-phospho-beta-D-ribosylamino)methylideneamino]imidazole-4-carboxamide = 5-[(5-phospho-1-deoxy-D-ribulos-1-ylimino)methylamino]-1-(5-phospho-beta-D-ribosyl)imidazole-4-carboxamide. The protein operates within amino-acid biosynthesis; L-histidine biosynthesis; L-histidine from 5-phospho-alpha-D-ribose 1-diphosphate: step 4/9. This chain is 1-(5-phosphoribosyl)-5-[(5-phosphoribosylamino)methylideneamino] imidazole-4-carboxamide isomerase, found in Methylocella silvestris (strain DSM 15510 / CIP 108128 / LMG 27833 / NCIMB 13906 / BL2).